Consider the following 1047-residue polypeptide: Formin-like protein 3 (1047 aa).

A lipid anchor (N-myristoyl glycine) is attached at Gly-2. The GBD/FH3 domain occupies 22-462 (VPMPDPTELE…AAFQRHNNIE (441 aa)). The segment at 520-561 (AVPVEAVAPPPPPPPPPPPPPPAPPLPSEVESIPIPPPPPPP) is disordered. Residues 527–546 (APPPPPPPPPPPPPPAPPLP) are compositionally biased toward pro residues. The FH2 domain maps to 580 to 970 (IKKPIKTKFR…MREKLLAQEA (391 aa)). The DAD domain occupies 1000–1037 (DHRPVYEGKDGTIEDIITVLKSVPFTARTAKRGSRFFC).

The protein belongs to the formin homology family.

Its subcellular location is the cytoplasm. It localises to the cell membrane. Functionally, required for developmental angiogenesis, but not for vasculogenesis. The protein is Formin-like protein 3 (fmnl3) of Danio rerio (Zebrafish).